A 277-amino-acid chain; its full sequence is Sulfur carrier protein FdhD (277 aa).

Residue cysteine 121 is the Cysteine persulfide intermediate of the active site. 260 to 265 (FCKPGR) lines the Mo-bis(molybdopterin guanine dinucleotide) pocket.

It belongs to the FdhD family.

Its subcellular location is the cytoplasm. Its function is as follows. Required for formate dehydrogenase (FDH) activity. Acts as a sulfur carrier protein that transfers sulfur from IscS to the molybdenum cofactor prior to its insertion into FDH. This chain is Sulfur carrier protein FdhD, found in Shigella dysenteriae serotype 1 (strain Sd197).